Consider the following 222-residue polypeptide: Large ribosomal subunit protein uL1 (222 aa).

Belongs to the universal ribosomal protein uL1 family. As to quaternary structure, part of the 50S ribosomal subunit.

In terms of biological role, binds directly to 23S rRNA. Probably involved in E site tRNA release. Its function is as follows. Protein L1 is also a translational repressor protein, it controls the translation of its operon by binding to its mRNA. In Pyrobaculum islandicum (strain DSM 4184 / JCM 9189 / GEO3), this protein is Large ribosomal subunit protein uL1.